Reading from the N-terminus, the 491-residue chain is Probable protein phosphatase 2C 6 (491 aa).

Positions 1 to 16 are enriched in basic and acidic residues; it reads MGLCHSKIDKTTRKET. The segment at 1 to 39 is disordered; it reads MGLCHSKIDKTTRKETGATSTATTTVERQSSGRLRRPRD. Positions 17–28 are enriched in low complexity; that stretch reads GATSTATTTVER. Positions 64 to 376 constitute a PPM-type phosphatase domain; sequence IACLYTQQGK…DDCAVVCLFL (313 aa). 4 residues coordinate Mn(2+): D100, G101, D321, and D367. Residues 391-422 are disordered; the sequence is VNHSHEESTESVTITSSKDADKKEEASTETNE.

The protein belongs to the PP2C family. The cofactor is Mg(2+). It depends on Mn(2+) as a cofactor.

It carries out the reaction O-phospho-L-seryl-[protein] + H2O = L-seryl-[protein] + phosphate. The catalysed reaction is O-phospho-L-threonyl-[protein] + H2O = L-threonyl-[protein] + phosphate. This Arabidopsis thaliana (Mouse-ear cress) protein is Probable protein phosphatase 2C 6.